Reading from the N-terminus, the 77-residue chain is Small ribosomal subunit protein bS18 (77 aa).

The protein belongs to the bacterial ribosomal protein bS18 family. In terms of assembly, part of the 30S ribosomal subunit. Forms a tight heterodimer with protein bS6.

Functionally, binds as a heterodimer with protein bS6 to the central domain of the 16S rRNA, where it helps stabilize the platform of the 30S subunit. In Lactobacillus gasseri (strain ATCC 33323 / DSM 20243 / BCRC 14619 / CIP 102991 / JCM 1131 / KCTC 3163 / NCIMB 11718 / NCTC 13722 / AM63), this protein is Small ribosomal subunit protein bS18.